Consider the following 212-residue polypeptide: Uracil phosphoribosyltransferase (212 aa).

5-phospho-alpha-D-ribose 1-diphosphate contacts are provided by residues Arg78, Arg103, and 130–138 (DPMLATGSS). Uracil contacts are provided by residues Ile193 and 198 to 200 (GDA). Asp199 is a 5-phospho-alpha-D-ribose 1-diphosphate binding site.

Belongs to the UPRTase family. Mg(2+) is required as a cofactor.

It catalyses the reaction UMP + diphosphate = 5-phospho-alpha-D-ribose 1-diphosphate + uracil. It participates in pyrimidine metabolism; UMP biosynthesis via salvage pathway; UMP from uracil: step 1/1. With respect to regulation, allosterically activated by GTP. In terms of biological role, catalyzes the conversion of uracil and 5-phospho-alpha-D-ribose 1-diphosphate (PRPP) to UMP and diphosphate. The chain is Uracil phosphoribosyltransferase from Pseudomonas fluorescens (strain SBW25).